The following is a 1171-amino-acid chain: ATP-dependent helicase/deoxyribonuclease subunit B (1171 aa).

Positions 1-390 constitute a UvrD-like helicase ATP-binding domain; the sequence is MSLRFVIGRA…HPLVECIRSA (390 aa). 8–15 serves as a coordination point for ATP; sequence GRAGSGKS. Positions 281–587 constitute a UvrD-like helicase C-terminal domain; that stretch reads MEQPRFHSPA…QFANIPPSLD (307 aa). The [4Fe-4S] cluster site is built by C805, C1129, C1132, and C1138.

It belongs to the helicase family. AddB/RexB type 1 subfamily. As to quaternary structure, heterodimer of AddA and AddB. Mg(2+) is required as a cofactor. The cofactor is [4Fe-4S] cluster.

The heterodimer acts as both an ATP-dependent DNA helicase and an ATP-dependent, dual-direction single-stranded exonuclease. Recognizes the chi site generating a DNA molecule suitable for the initiation of homologous recombination. The AddB subunit has 5' -&gt; 3' nuclease activity but not helicase activity. The sequence is that of ATP-dependent helicase/deoxyribonuclease subunit B from Bacillus cereus (strain ZK / E33L).